The primary structure comprises 83 residues: Small ribosomal subunit protein bS16 (83 aa).

Belongs to the bacterial ribosomal protein bS16 family.

This chain is Small ribosomal subunit protein bS16, found in Chromobacterium violaceum (strain ATCC 12472 / DSM 30191 / JCM 1249 / CCUG 213 / NBRC 12614 / NCIMB 9131 / NCTC 9757 / MK).